The primary structure comprises 282 residues: Bifunctional protein FolD 2 (282 aa).

NADP(+) is bound by residues 164-166 (GRS) and Ser-189.

It belongs to the tetrahydrofolate dehydrogenase/cyclohydrolase family. In terms of assembly, homodimer.

It catalyses the reaction (6R)-5,10-methylene-5,6,7,8-tetrahydrofolate + NADP(+) = (6R)-5,10-methenyltetrahydrofolate + NADPH. The catalysed reaction is (6R)-5,10-methenyltetrahydrofolate + H2O = (6R)-10-formyltetrahydrofolate + H(+). It participates in one-carbon metabolism; tetrahydrofolate interconversion. In terms of biological role, catalyzes the oxidation of 5,10-methylenetetrahydrofolate to 5,10-methenyltetrahydrofolate and then the hydrolysis of 5,10-methenyltetrahydrofolate to 10-formyltetrahydrofolate. This chain is Bifunctional protein FolD 2, found in Lactobacillus johnsonii (strain CNCM I-12250 / La1 / NCC 533).